The sequence spans 597 residues: Protein Spindly (597 aa).

At M1 the chain carries N-acetylmethionine. Residues 1-445 (MEADITNLRN…LKLKYEPEER (445 aa)) adopt a coiled-coil conformation. Phosphoserine occurs at positions 508 and 547. Residues 531–597 (PASTEVLHEQ…STPEMQCPQQ (67 aa)) are disordered. Polar residues predominate over residues 540–549 (QSGNTPSSPR). The segment covering 550–574 (LTEESRLPTKVKERKEATSKLEKGA) has biased composition (basic and acidic residues). Residues 583–597 (YVSSKSTPEMQCPQQ) show a composition bias toward polar residues.

This sequence belongs to the Spindly family. In terms of assembly, interacts with KNTC1 and ZW10. These interactions appear weak and may be transient or indirect. Interacts with dynein intermediate chain and dynactin (DCTN1). Interacts with the catalytically active form of USP45. Monoubiquitinated with'Lys-48' linkage. Deubiquitinated by USP45.

The protein localises to the cytoplasm. The protein resides in the cytoskeleton. It is found in the microtubule organizing center. It localises to the centrosome. Its subcellular location is the chromosome. The protein localises to the centromere. The protein resides in the kinetochore. It is found in the nucleus. It localises to the spindle pole. In terms of biological role, required for the localization of dynein and dynactin to the mitotic kintochore. Dynein is believed to control the initial lateral interaction between the kinetochore and spindle microtubules and to facilitate the subsequent formation of end-on kinetochore-microtubule attachments mediated by the NDC80 complex. Also required for correct spindle orientation. Does not appear to be required for the removal of spindle assembly checkpoint (SAC) proteins from the kinetochore upon bipolar spindle attachment. Acts as an adapter protein linking the dynein motor complex to various cargos and converts dynein from a non-processive to a highly processive motor in the presence of dynactin. Facilitates the interaction between dynein and dynactin and activates dynein processivity (the ability to move along a microtubule for a long distance without falling off the track). Plays a role in cell migration. This chain is Protein Spindly (Spdl1), found in Rattus norvegicus (Rat).